The primary structure comprises 475 residues: Aspartyl/glutamyl-tRNA(Asn/Gln) amidotransferase subunit B (475 aa).

Belongs to the GatB/GatE family. GatB subfamily. Heterotrimer of A, B and C subunits.

It catalyses the reaction L-glutamyl-tRNA(Gln) + L-glutamine + ATP + H2O = L-glutaminyl-tRNA(Gln) + L-glutamate + ADP + phosphate + H(+). It carries out the reaction L-aspartyl-tRNA(Asn) + L-glutamine + ATP + H2O = L-asparaginyl-tRNA(Asn) + L-glutamate + ADP + phosphate + 2 H(+). Its function is as follows. Allows the formation of correctly charged Asn-tRNA(Asn) or Gln-tRNA(Gln) through the transamidation of misacylated Asp-tRNA(Asn) or Glu-tRNA(Gln) in organisms which lack either or both of asparaginyl-tRNA or glutaminyl-tRNA synthetases. The reaction takes place in the presence of glutamine and ATP through an activated phospho-Asp-tRNA(Asn) or phospho-Glu-tRNA(Gln). The chain is Aspartyl/glutamyl-tRNA(Asn/Gln) amidotransferase subunit B from Clostridium novyi (strain NT).